The sequence spans 373 residues: Anhydro-N-acetylmuramic acid kinase (373 aa).

An ATP-binding site is contributed by 13–20 (GTSMDGID).

Belongs to the anhydro-N-acetylmuramic acid kinase family.

The catalysed reaction is 1,6-anhydro-N-acetyl-beta-muramate + ATP + H2O = N-acetyl-D-muramate 6-phosphate + ADP + H(+). It participates in amino-sugar metabolism; 1,6-anhydro-N-acetylmuramate degradation. Its pathway is cell wall biogenesis; peptidoglycan recycling. In terms of biological role, catalyzes the specific phosphorylation of 1,6-anhydro-N-acetylmuramic acid (anhMurNAc) with the simultaneous cleavage of the 1,6-anhydro ring, generating MurNAc-6-P. Is required for the utilization of anhMurNAc either imported from the medium or derived from its own cell wall murein, and thus plays a role in cell wall recycling. This is Anhydro-N-acetylmuramic acid kinase from Brucella abortus (strain 2308).